A 118-amino-acid chain; its full sequence is Waprin-Enh1 (118 aa).

Positions 1–24 are cleaved as a signal peptide; it reads MKTLTGLLLVGLLALWIGLPSTSS. WAP domains lie at 25–72 and 74–118; these read KILF…RSCR and PPVL…RICK. 8 cysteine pairs are disulfide-bonded: Cys30–Cys63, Cys40–Cys67, Cys50–Cys62, Cys56–Cys71, Cys81–Cys109, Cys88–Cys113, Cys96–Cys108, and Cys102–Cys117.

The protein belongs to the venom waprin family. As to expression, expressed by the venom gland.

It is found in the secreted. Functionally, damages membranes of susceptible bacteria. Has no hemolytic activity. Not toxic to mice. Does not inhibit the proteinases elastase and cathepsin G. In Pseudoferania polylepis (Macleay's water snake), this protein is Waprin-Enh1.